Here is a 451-residue protein sequence, read N- to C-terminus: Bifunctional protein GlmU (451 aa).

The segment at 1 to 217 is pyrophosphorylase; the sequence is MKTLILAAGL…IDEVTGVNDR (217 aa). UDP-N-acetyl-alpha-D-glucosamine-binding positions include 6 to 9, Lys-20, Gln-68, 73 to 74, 95 to 97, Gly-134, Glu-146, Asn-161, and Asn-215; these read LAAG, GT, and YGD. Residue Asp-97 participates in Mg(2+) binding. Asn-215 provides a ligand contact to Mg(2+). The interval 218–238 is linker; the sequence is IQLSKLEKNMRKRINEKLMRE. Residues 239–451 are N-acetyltransferase; it reads GVRIIDPESV…GGNQNADSKE (213 aa). Positions 320 and 338 each coordinate UDP-N-acetyl-alpha-D-glucosamine. The active-site Proton acceptor is His-350. UDP-N-acetyl-alpha-D-glucosamine contacts are provided by Tyr-353 and Asn-364. Acetyl-CoA is bound by residues Ala-367, 373–374, Ser-392, Ala-410, and Arg-427; that span reads NY.

The protein in the N-terminal section; belongs to the N-acetylglucosamine-1-phosphate uridyltransferase family. This sequence in the C-terminal section; belongs to the transferase hexapeptide repeat family. Homotrimer. It depends on Mg(2+) as a cofactor.

Its subcellular location is the cytoplasm. It carries out the reaction alpha-D-glucosamine 1-phosphate + acetyl-CoA = N-acetyl-alpha-D-glucosamine 1-phosphate + CoA + H(+). It catalyses the reaction N-acetyl-alpha-D-glucosamine 1-phosphate + UTP + H(+) = UDP-N-acetyl-alpha-D-glucosamine + diphosphate. Its pathway is nucleotide-sugar biosynthesis; UDP-N-acetyl-alpha-D-glucosamine biosynthesis; N-acetyl-alpha-D-glucosamine 1-phosphate from alpha-D-glucosamine 6-phosphate (route II): step 2/2. The protein operates within nucleotide-sugar biosynthesis; UDP-N-acetyl-alpha-D-glucosamine biosynthesis; UDP-N-acetyl-alpha-D-glucosamine from N-acetyl-alpha-D-glucosamine 1-phosphate: step 1/1. It functions in the pathway bacterial outer membrane biogenesis; LPS lipid A biosynthesis. Functionally, catalyzes the last two sequential reactions in the de novo biosynthetic pathway for UDP-N-acetylglucosamine (UDP-GlcNAc). The C-terminal domain catalyzes the transfer of acetyl group from acetyl coenzyme A to glucosamine-1-phosphate (GlcN-1-P) to produce N-acetylglucosamine-1-phosphate (GlcNAc-1-P), which is converted into UDP-GlcNAc by the transfer of uridine 5-monophosphate (from uridine 5-triphosphate), a reaction catalyzed by the N-terminal domain. The sequence is that of Bifunctional protein GlmU from Thermosipho africanus (strain TCF52B).